A 543-amino-acid polypeptide reads, in one-letter code: Intermediate filament protein ifb-2 (543 aa).

Residues 1 to 10 show a composition bias toward polar residues; the sequence is MSAVSYSMHR. A disordered region spans residues 1–27; that stretch reads MSAVSYSMHRTTTTTSSSSHGGVSAGH. The segment at 1-42 is head; sequence MSAVSYSMHRTTTTTSSSSHGGVSAGHAAEEFVASAEREKQE. Residues 39–388 form the IF rod domain; the sequence is EKQEMQQLNS…KLVESEEGRF (350 aa). The interval 43–74 is coil 1A; the sequence is MQQLNSRLEVYISRVRQLEDRNKELVIELDTL. A linker 1 region spans residues 75 to 88; sequence RGSLGNDIGQIKFK. Residues 89–223 form a coil 1B region; the sequence is FNDSLVKVRR…RIHSQEITEL (135 aa). Positions 224-240 are linker 12; the sequence is RTLLAQAPADTREFFKN. Residues 241–387 form a coil 2 region; sequence ELALAIREIK…RKLVESEEGR (147 aa). A tail region spans residues 388–542; the sequence is FTHVGQGVVV…SHIQTTVASS (155 aa). The region spanning 420–538 is the LTD domain; it reads TRSSFKRHAK…IEKASHIQTT (119 aa).

It belongs to the intermediate filament family. Expression is restricted to a discrete circumferential subapical layer within the intestinal terminal web (known as the 'endotube'); this layer joins directly to the apical junction complexes that connect adjacent gut cells.

The protein localises to the cytoplasm. Functionally, cytoplasmic intermediate filaments provide mechanical strength to cells. Not essential protein. Component of the terminal web (organelle-depleted, intermediate filament-rich layer of cytoplasm that underlies the apical microvilli of polarized epithelial cells) in embryonic through to adult gut cells. Correct localization of filaments requires let-413. This chain is Intermediate filament protein ifb-2 (ifb-2), found in Caenorhabditis elegans.